Reading from the N-terminus, the 239-residue chain is Ribonuclease PH (239 aa).

Phosphate contacts are provided by residues Arg87 and 125 to 127 (GTR).

It belongs to the RNase PH family. As to quaternary structure, homohexameric ring arranged as a trimer of dimers.

The enzyme catalyses tRNA(n+1) + phosphate = tRNA(n) + a ribonucleoside 5'-diphosphate. Functionally, phosphorolytic 3'-5' exoribonuclease that plays an important role in tRNA 3'-end maturation. Removes nucleotide residues following the 3'-CCA terminus of tRNAs; can also add nucleotides to the ends of RNA molecules by using nucleoside diphosphates as substrates, but this may not be physiologically important. Probably plays a role in initiation of 16S rRNA degradation (leading to ribosome degradation) during starvation. The sequence is that of Ribonuclease PH from Cyanothece sp. (strain PCC 7425 / ATCC 29141).